Reading from the N-terminus, the 402-residue chain is Putative cytochrome P450 133B1 (402 aa).

Residue C348 coordinates heme.

It belongs to the cytochrome P450 family. Heme is required as a cofactor.

The sequence is that of Putative cytochrome P450 133B1 (cyp133B1) from Xylella fastidiosa (strain 9a5c).